We begin with the raw amino-acid sequence, 466 residues long: 3-isopropylmalate dehydratase large subunit (466 aa).

Residues Cys-347, Cys-407, and Cys-410 each coordinate [4Fe-4S] cluster.

This sequence belongs to the aconitase/IPM isomerase family. LeuC type 1 subfamily. As to quaternary structure, heterodimer of LeuC and LeuD. Requires [4Fe-4S] cluster as cofactor.

It carries out the reaction (2R,3S)-3-isopropylmalate = (2S)-2-isopropylmalate. The protein operates within amino-acid biosynthesis; L-leucine biosynthesis; L-leucine from 3-methyl-2-oxobutanoate: step 2/4. In terms of biological role, catalyzes the isomerization between 2-isopropylmalate and 3-isopropylmalate, via the formation of 2-isopropylmaleate. This Solibacter usitatus (strain Ellin6076) protein is 3-isopropylmalate dehydratase large subunit.